The primary structure comprises 235 residues: Small ribosomal subunit protein uS3 (235 aa).

In terms of domain architecture, KH type-2 spans 39 to 107 (VRQFLNKELA…PAQINIAEVK (69 aa)). The tract at residues 216-235 (QPEQQPTDKPKKVPRGKGRK) is disordered.

It belongs to the universal ribosomal protein uS3 family. Part of the 30S ribosomal subunit. Forms a tight complex with proteins S10 and S14.

In terms of biological role, binds the lower part of the 30S subunit head. Binds mRNA in the 70S ribosome, positioning it for translation. The polypeptide is Small ribosomal subunit protein uS3 (Aggregatibacter actinomycetemcomitans (Actinobacillus actinomycetemcomitans)).